The following is a 306-amino-acid chain: Glutaminase (306 aa).

7 residues coordinate substrate: serine 62, asparagine 114, glutamate 159, asparagine 166, tyrosine 190, tyrosine 242, and valine 260.

Belongs to the glutaminase family. As to quaternary structure, homotetramer.

It catalyses the reaction L-glutamine + H2O = L-glutamate + NH4(+). This Clostridium tetani (strain Massachusetts / E88) protein is Glutaminase.